The sequence spans 424 residues: CinA-like protein (424 aa).

The protein belongs to the CinA family.

The chain is CinA-like protein from Shewanella denitrificans (strain OS217 / ATCC BAA-1090 / DSM 15013).